The following is a 585-amino-acid chain: MSMLTITIDGKTTSVPEGSTILDAAKTLDIDIPTLCYLNLEALSINNKAASCRVCVVEVEGRRNLAPSCATPVTDNMVVKTNSLRVLNARRTVLELLLSDHPKDCLVCAKSGECELQTLAERFGIRESPYDGGEMSHYRKDISASIIRDMDKCIMCRRCETMCNTVQTCGVLSGVNRGFTAVVAPAFEMNLADTVCTNCGQCVAVCPTGALVEHEYIWEVVEALANPDKVVIVQTAPAVRAALGEDLGVAPGTSVTGKMAAALRRLGFDHVFDTDFAADLTIMEEGSEFLDRLGKHLAGDTNVKLPILTSCCPGWVKFFEHQFPDMLDVPSTAKSPQQMFGAIAKTYYADLLGIPREKLVVVSVMPCLAKKYECARPEFSVNGNPDVDIVITTRELAKLVKRMNIDFAGLPDEDFDAPLGASTGAAPIFGVTGGVIEAALRTAYELATGETLKKVDFEDVRGMDGVKKAKVKVGDNELVIGVAHGLGNARELLKPCGAGETFHAIEVMACPGGCIGGGGQPYHHGDVELLKKRTQVLYAEDAGKPLRKSHENPYIIELYEKFLGKPLSERSHQLLHTHYFKRQRL.

A 2Fe-2S ferredoxin-type domain is found at 2-85 (SMLTITIDGK…NMVVKTNSLR (84 aa)). The [2Fe-2S] cluster site is built by Cys-36, Cys-52, Cys-55, and Cys-69. The 40-residue stretch at 85–124 (RVLNARRTVLELLLSDHPKDCLVCAKSGECELQTLAERFG) folds into the 4Fe-4S His(Cys)3-ligated-type domain. [4Fe-4S] cluster contacts are provided by His-101, Cys-105, Cys-108, and Cys-114. 4Fe-4S ferredoxin-type domains lie at 144–174 (ASII…VLSG) and 185–216 (PAFE…EHEY).

Heterotetramer composed of HndA, HndB, HndC and HndD subunits. HndD is probably the hydrogenase subunit. [4Fe-4S] cluster is required as a cofactor.

It carries out the reaction H2 + NADP(+) = NADPH + H(+). Its activity is regulated as follows. Inhibited by oxygen. Functionally, catalyzes the reduction of NADP in the presence of molecular H(2) to yield NADPH. This is NADP-reducing hydrogenase subunit HndD (hndD) from Solidesulfovibrio fructosivorans (Desulfovibrio fructosivorans).